The primary structure comprises 764 residues: Polyadenylate-binding protein, cytoplasmic and nuclear (764 aa).

The tract at residues 36–56 (VPEAQAEGAEAAPTPTAAPHP) is disordered. 4 RRM domains span residues 60-138 (ASLY…WSQR), 148-225 (GNIF…HHIP), 241-318 (TNVY…RAQK), and 344-462 (VNLY…LAQR). 2 disordered regions span residues 375–420 (VMRD…GDRK) and 587–634 (GRGG…PRGN). Composition is skewed to basic and acidic residues over residues 387-399 (KDEKDKENKKEGE) and 408-420 (GSEKKTEKKGDRK). The span at 587–596 (GRGGPAGRGP) shows a compositional bias: gly residues. Over residues 597 to 613 (QGIPAGIPQGLQGGPAV) the composition is skewed to low complexity. Residues 657-734 (GSFLQAQLAT…ALAVYDEYLK (78 aa)) enclose the PABC domain. Residues 735–745 (TQGQQPTQQPA) are compositionally biased toward polar residues. The interval 735 to 764 (TQGQQPTQQPAEANGEQPKAEEQKPEEQKA) is disordered. Residues 752 to 764 (PKAEEQKPEEQKA) are compositionally biased toward basic and acidic residues.

It belongs to the polyadenylate-binding protein type-1 family.

It localises to the cytoplasm. The protein resides in the nucleus. Binds the poly(A) tail of mRNA. Appears to be an important mediator of the multiple roles of the poly(A) tail in mRNA biogenesis, stability and translation. In the nucleus, involved in both mRNA cleavage and polyadenylation. Is also required for efficient mRNA export to the cytoplasm. Acts in concert with a poly(A)-specific nuclease (PAN) to affect poly(A) tail shortening, which may occur concomitantly with either nucleocytoplasmic mRNA transport or translational initiation. In the cytoplasm, stimulates translation initiation and regulates mRNA decay through translation termination-coupled poly(A) shortening, probably mediated by PAN. This is Polyadenylate-binding protein, cytoplasmic and nuclear (pabp-1) from Neurospora crassa (strain ATCC 24698 / 74-OR23-1A / CBS 708.71 / DSM 1257 / FGSC 987).